The chain runs to 354 residues: Bergaptol O-methyltransferase (354 aa).

A bergaptol-binding site is contributed by His121. The S-adenosyl-L-homocysteine site is built by Ser174, Gly198, Asp221, and Lys255. Bergaptol is bound at residue His259. His259 (proton acceptor) is an active-site residue.

Belongs to the class I-like SAM-binding methyltransferase superfamily. Cation-independent O-methyltransferase family. COMT subfamily.

It carries out the reaction a 5-hydroxyfurocoumarin + S-adenosyl-L-methionine = a 5-methoxyfurocoumarin + S-adenosyl-L-homocysteine + H(+). It catalyses the reaction bergaptol + S-adenosyl-L-methionine = bergapten + S-adenosyl-L-homocysteine. Its activity is regulated as follows. Inhibited by Cu(2+), Ni(2+) and Co(2+). The polypeptide is Bergaptol O-methyltransferase (Ammi majus (Bishop's weed)).